The primary structure comprises 62 residues: Trypsin inhibitor MCI-3 (62 aa).

This sequence belongs to the protease inhibitor I13 (potato type I serine protease inhibitor) family.

This Momordica charantia (Bitter gourd) protein is Trypsin inhibitor MCI-3.